A 784-amino-acid polypeptide reads, in one-letter code: Ribosome biogenesis protein BOP1 homolog (784 aa).

Positions 1–11 (MTKKLALKRRG) are enriched in basic residues. Residues 1–159 (MTKKLALKRR…DSDTSDEEDI (159 aa)) are disordered. Acidic residues-rich tracts occupy residues 27–36 (SENEEEEEDL), 45–54 (EDSTDDEGID), 62–73 (SEELQFESDEEG), and 84–111 (AEED…EDEE). Composition is skewed to basic and acidic residues over residues 112–123 (KVSKSKQSDDKP) and 138–148 (LPKRDSSKPEY). Over residues 149–158 (QDSDTSDEED) the composition is skewed to acidic residues. WD repeat units lie at residues 445–486 (GHTD…RTIE), 488–526 (DEVV…KVLV), 570–612 (THFK…SQIP), 615–653 (KSKG…LVKK), 656–695 (TNSK…KPYQ), 699–738 (LHRN…DLLQ), and 754–784 (RDEF…RLYT).

The protein belongs to the WD repeat BOP1/ERB1 family.

It localises to the nucleus. It is found in the nucleolus. The protein localises to the nucleoplasm. Its function is as follows. Required for maturation of ribosomal RNAs and formation of the large ribosomal subunit. This chain is Ribosome biogenesis protein BOP1 homolog, found in Drosophila sechellia (Fruit fly).